Consider the following 440-residue polypeptide: Chromosome partition protein MukF (440 aa).

Residues 208–236 (LDETSGNLRELQDTLNAAGDKLQSQLLRI) form a leucine-zipper region.

The protein belongs to the MukF family. Interacts, and probably forms a ternary complex, with MukE and MukB via its C-terminal region. The complex formation is stimulated by calcium or magnesium. It is required for an interaction between MukE and MukB.

The protein localises to the cytoplasm. It is found in the nucleoid. In terms of biological role, involved in chromosome condensation, segregation and cell cycle progression. May participate in facilitating chromosome segregation by condensation DNA from both sides of a centrally located replisome during cell division. Not required for mini-F plasmid partitioning. Probably acts via its interaction with MukB and MukE. Overexpression results in anucleate cells. It has a calcium binding activity. In Histophilus somni (strain 2336) (Haemophilus somnus), this protein is Chromosome partition protein MukF.